The chain runs to 113 residues: Tubulin-folding cofactor A (113 aa).

The interval Leu83 to Ala113 is disordered. The segment covering Lys89–Ala113 has biased composition (basic and acidic residues).

The protein belongs to the TBCA family. As to quaternary structure, monomer. Supercomplex made of cofactors A to E. Cofactors A and D function by capturing and stabilizing tubulin in a quasi-native conformation. Cofactor E binds to the cofactor D-tubulin complex; interaction with cofactor C then causes the release of tubulin polypeptides that are committed to the native state. Interacts with TUBB9. In terms of tissue distribution, expressed in leaves, roots, flowers and stems.

Functionally, tubulin-folding protein involved in the control of the alpha-/beta-tubulin monomer balance. Functions as a reservoir of bound and non-toxic beta-tubulin. Required in the developing embryo. This is Tubulin-folding cofactor A (TFCA) from Arabidopsis thaliana (Mouse-ear cress).